A 245-amino-acid chain; its full sequence is 1-(5-phosphoribosyl)-5-[(5-phosphoribosylamino)methylideneamino] imidazole-4-carboxamide isomerase (245 aa).

Residue aspartate 7 is the Proton acceptor of the active site. Aspartate 129 (proton donor) is an active-site residue.

This sequence belongs to the HisA/HisF family.

The protein resides in the cytoplasm. The enzyme catalyses 1-(5-phospho-beta-D-ribosyl)-5-[(5-phospho-beta-D-ribosylamino)methylideneamino]imidazole-4-carboxamide = 5-[(5-phospho-1-deoxy-D-ribulos-1-ylimino)methylamino]-1-(5-phospho-beta-D-ribosyl)imidazole-4-carboxamide. It participates in amino-acid biosynthesis; L-histidine biosynthesis; L-histidine from 5-phospho-alpha-D-ribose 1-diphosphate: step 4/9. The protein is 1-(5-phosphoribosyl)-5-[(5-phosphoribosylamino)methylideneamino] imidazole-4-carboxamide isomerase of Salmonella dublin (strain CT_02021853).